We begin with the raw amino-acid sequence, 561 residues long: 4-coumarate--CoA ligase 1 (561 aa).

Positions 210, 211, 212, 213, 214, and 218 each coordinate ATP. The (E)-4-coumaroyl-AMP site is built by Tyr-260 and Ser-264. Residue Lys-281 participates in CoA binding. The tract at residues 283-352 (EINLLLELIQ…AKFPNAKLGQ (70 aa)) is SBD1. (E)-4-coumaroyl-AMP-binding residues include Ala-330, Gln-352, Gly-353, Thr-357, and Met-365. 3 residues coordinate ATP: Gln-352, Gly-353, and Thr-357. Residues 353 to 420 (GYGMTEAGPV…IRGHQIMKGY (68 aa)) form an SBD2 region. Residues Asp-441 and Arg-456 each contribute to the ATP site. Positions 458 and 462 each coordinate (E)-4-coumaroyl-AMP. 2 residues coordinate CoA: Lys-464 and Gly-465. An ATP-binding site is contributed by Lys-547.

Belongs to the ATP-dependent AMP-binding enzyme family. The cofactor is Mg(2+). Preferentially expressed in roots, bolting stems and siliques. Also detected in leaves.

The enzyme catalyses (E)-4-coumarate + ATP + CoA = (E)-4-coumaroyl-CoA + AMP + diphosphate. It catalyses the reaction (E)-caffeate + ATP + CoA = (E)-caffeoyl-CoA + AMP + diphosphate. The catalysed reaction is (E)-ferulate + ATP + CoA = (E)-feruloyl-CoA + AMP + diphosphate. It carries out the reaction (E)-4-coumarate + ATP + H(+) = (E)-4-coumaroyl-AMP + diphosphate. The enzyme catalyses (E)-4-coumaroyl-AMP + CoA = (E)-4-coumaroyl-CoA + AMP + H(+). It catalyses the reaction (E)-caffeate + ATP + H(+) = (E)-caffeoyl-AMP + diphosphate. The catalysed reaction is (E)-caffeoyl-AMP + CoA = (E)-caffeoyl-CoA + AMP + H(+). It carries out the reaction (E)-ferulate + ATP + H(+) = (E)-feruloyl-AMP + diphosphate. The enzyme catalyses (E)-feruloyl-AMP + CoA = (E)-feruloyl-CoA + AMP + H(+). The protein operates within phytoalexin biosynthesis; 3,4',5-trihydroxystilbene biosynthesis; 3,4',5-trihydroxystilbene from trans-4-coumarate: step 1/2. Functionally, produces CoA thioesters of a variety of hydroxy- and methoxy-substituted cinnamic acids, which are used to synthesize several phenylpropanoid-derived compounds, including anthocyanins, flavonoids, isoflavonoids, coumarins, lignin, suberin and wall-bound phenolics. Follows a two-step reaction mechanism, wherein the carboxylate substrate first undergoes adenylation by ATP, followed by a thioesterification in the presence of CoA to yield the final CoA thioesters. The chain is 4-coumarate--CoA ligase 1 from Arabidopsis thaliana (Mouse-ear cress).